A 239-amino-acid chain; its full sequence is Uridylate kinase (239 aa).

10-13 (KLSG) lines the ATP pocket. Residues 18–23 (GEQGYG) form an involved in allosteric activation by GTP region. Residue Gly-52 participates in UMP binding. ATP contacts are provided by Gly-53 and Arg-57. UMP contacts are provided by residues Asp-72 and 133 to 140 (TGNPYFST). Residues Asn-161, Tyr-167, and Glu-170 each coordinate ATP.

This sequence belongs to the UMP kinase family. As to quaternary structure, homohexamer.

It is found in the cytoplasm. The catalysed reaction is UMP + ATP = UDP + ADP. Its pathway is pyrimidine metabolism; CTP biosynthesis via de novo pathway; UDP from UMP (UMPK route): step 1/1. Its activity is regulated as follows. Allosterically activated by GTP. Inhibited by UTP. Functionally, catalyzes the reversible phosphorylation of UMP to UDP. In Halalkalibacterium halodurans (strain ATCC BAA-125 / DSM 18197 / FERM 7344 / JCM 9153 / C-125) (Bacillus halodurans), this protein is Uridylate kinase.